Consider the following 100-residue polypeptide: Small ribosomal subunit protein uS14c (100 aa).

The protein belongs to the universal ribosomal protein uS14 family. In terms of assembly, part of the 30S ribosomal subunit.

It is found in the plastid. The protein localises to the chloroplast. Functionally, binds 16S rRNA, required for the assembly of 30S particles. The sequence is that of Small ribosomal subunit protein uS14c from Cicer arietinum (Chickpea).